Here is an 802-residue protein sequence, read N- to C-terminus: Oligophrenin-1 (802 aa).

Positions 265–368 (QPTIEGYLYT…WMEAMDGKEP (104 aa)) constitute a PH domain. Positions 380 to 564 (MELNEVGFKF…ILIEHFGKIY (185 aa)) constitute a Rho-GAP domain. Disordered regions lie at residues 569–589 (EESA…HKPI), 607–770 (LDES…NAGE), and 783–802 (FETA…GDES). Residues 616–627 (HQTPNGTITSSI) show a composition bias toward polar residues. Residues 716–732 (HHKEGDADSFSKVRPPG) show a composition bias toward basic and acidic residues.

Interacts with HOMER1. Interacts with AMPA receptor complexes. Interacts with SH3GL2 (endophilin-A1). Interacts (via C-terminus) with NR1D1.

The protein localises to the postsynapse. It is found in the presynapse. It localises to the cell projection. Its subcellular location is the axon. The protein resides in the dendritic spine. The protein localises to the dendrite. It is found in the cytoplasm. Functionally, stimulates GTP hydrolysis of members of the Rho family. Its action on RHOA activity and signaling is implicated in growth and stabilization of dendritic spines, and therefore in synaptic function. Critical for the stabilization of AMPA receptors at postsynaptic sites. Critical for the regulation of synaptic vesicle endocytosis at pre-synaptic terminals. Required for the localization of NR1D1 to dendrites, can suppress its repressor activity and protect it from proteasomal degradation. The chain is Oligophrenin-1 (OPHN1) from Pan troglodytes (Chimpanzee).